The primary structure comprises 365 residues: 3-isopropylmalate dehydrogenase (365 aa).

NAD(+) is bound at residue 78–91; the sequence is GPKWDTLPAEERPE. Substrate contacts are provided by R99, R109, R138, and D227. 3 residues coordinate Mg(2+): D227, D251, and D255. Residue 285 to 297 coordinates NAD(+); the sequence is GSAPDIAGKNIAN.

It belongs to the isocitrate and isopropylmalate dehydrogenases family. LeuB type 1 subfamily. As to quaternary structure, homodimer. It depends on Mg(2+) as a cofactor. Requires Mn(2+) as cofactor.

It localises to the cytoplasm. It catalyses the reaction (2R,3S)-3-isopropylmalate + NAD(+) = 4-methyl-2-oxopentanoate + CO2 + NADH. Its pathway is amino-acid biosynthesis; L-leucine biosynthesis; L-leucine from 3-methyl-2-oxobutanoate: step 3/4. Functionally, catalyzes the oxidation of 3-carboxy-2-hydroxy-4-methylpentanoate (3-isopropylmalate) to 3-carboxy-4-methyl-2-oxopentanoate. The product decarboxylates to 4-methyl-2 oxopentanoate. This Syntrophotalea carbinolica (strain DSM 2380 / NBRC 103641 / GraBd1) (Pelobacter carbinolicus) protein is 3-isopropylmalate dehydrogenase.